A 535-amino-acid chain; its full sequence is Arylsulfatase G (535 aa).

The first 18 residues, 1 to 18 (MGWLFLKVLFLGVTFLGC), serve as a signal peptide directing secretion. Asp-44, Asp-45, and Cys-84 together coordinate Ca(2+). The active-site Nucleophile is Cys-84. Cys-84 carries the post-translational modification 3-oxoalanine (Cys). Asn-117 carries N-linked (GlcNAc...) asparagine glycosylation. Residue Lys-137 participates in substrate binding. His-139 is an active-site residue. Ser-162 serves as a coordination point for substrate. N-linked (GlcNAc...) asparagine glycosylation is present at Asn-215. His-251 provides a ligand contact to substrate. 2 residues coordinate Ca(2+): Asp-302 and Asn-303. Asn-356 and Asn-497 each carry an N-linked (GlcNAc...) asparagine glycan.

This sequence belongs to the sulfatase family. Requires Ca(2+) as cofactor. N-glycosylated with both high mannose and complex type sugars. In terms of processing, the conversion to 3-oxoalanine (also known as C-formylglycine, FGly), of a serine or cysteine residue in prokaryotes and of a cysteine residue in eukaryotes, is critical for catalytic activity. Post-translationally, the 63-kDa precursor undergoes proteolytic processing in two steps, yielding two fragments in the first step (apparent molecular masses of 44 and 18 kDa). In the second step, the 44-kDa fragment is processed further to the 34- and 10-kDa chains. The 10-kDa chain is a cleavage product of the 44-kDa fragment but linked to the 18-kDa chain through a disulfide bridge.

Its subcellular location is the lysosome. The catalysed reaction is an aryl sulfate + H2O = a phenol + sulfate + H(+). The enzyme catalyses Hydrolysis of the 3-sulfate groups of the N-sulfo-D-glucosamine 3-O-sulfate units of heparin.. Displays arylsulfatase activity with pseudosubstrates at acidic pH, such as p-nitrocatechol sulfate. Catalyzes the hydrolysis of the 3-sulfate groups of the N-sulfo-D-glucosamine 3-O-sulfate units of heparin. The polypeptide is Arylsulfatase G (ARSG) (Canis lupus familiaris (Dog)).